The primary structure comprises 526 residues: CTP synthase (526 aa).

Residues 1-264 are amidoligase domain; the sequence is MPQRFIVVTG…HKLIAKELDI (264 aa). Ser-14 contributes to the CTP binding site. UTP is bound at residue Ser-14. Residues 15 to 20 and Asp-72 contribute to the ATP site; that span reads GIGKGI. Mg(2+) contacts are provided by Asp-72 and Glu-138. CTP contacts are provided by residues 145–147, 185–190, and Lys-221; these read DIE and KTKPTQ. Residues 185–190 and Lys-221 contribute to the UTP site; that span reads KTKPTQ. Residues 282–526 form the Glutamine amidotransferase type-1 domain; the sequence is KIGIVGKYLG…VKAAGGKIND (245 aa). Residue Gly-342 coordinates L-glutamine. Residue Cys-369 is the Nucleophile; for glutamine hydrolysis of the active site. L-glutamine is bound by residues 370–373, Glu-393, and Arg-451; that span reads LGMQ. Residues His-499 and Glu-501 contribute to the active site.

The protein belongs to the CTP synthase family. Homotetramer.

It catalyses the reaction UTP + L-glutamine + ATP + H2O = CTP + L-glutamate + ADP + phosphate + 2 H(+). The enzyme catalyses L-glutamine + H2O = L-glutamate + NH4(+). It carries out the reaction UTP + NH4(+) + ATP = CTP + ADP + phosphate + 2 H(+). The protein operates within pyrimidine metabolism; CTP biosynthesis via de novo pathway; CTP from UDP: step 2/2. Its activity is regulated as follows. Allosterically activated by GTP, when glutamine is the substrate; GTP has no effect on the reaction when ammonia is the substrate. The allosteric effector GTP functions by stabilizing the protein conformation that binds the tetrahedral intermediate(s) formed during glutamine hydrolysis. Inhibited by the product CTP, via allosteric rather than competitive inhibition. Catalyzes the ATP-dependent amination of UTP to CTP with either L-glutamine or ammonia as the source of nitrogen. Regulates intracellular CTP levels through interactions with the four ribonucleotide triphosphates. The polypeptide is CTP synthase (Thermosipho africanus (strain TCF52B)).